Reading from the N-terminus, the 263-residue chain is 4'-phosphopantetheinyl transferase pptA (263 aa).

It belongs to the P-Pant transferase superfamily.

It catalyses the reaction apo-[ACP] + CoA = holo-[ACP] + adenosine 3',5'-bisphosphate + H(+). In terms of biological role, transfers the 4'-phosphopantetheine moiety from coenzyme A to a Ser of an acyl-carrier-protein. Activates the peptidyl carrier protein (PCP) domains of surfactin synthas. The polypeptide is 4'-phosphopantetheinyl transferase pptA (pptA) (Paxillus involutus (Naked brimcap)).